Here is a 542-residue protein sequence, read N- to C-terminus: MFS thioclapurine efflux transporter tcpA (542 aa).

Over residues 1-10 the composition is skewed to basic and acidic residues; that stretch reads MATVGTEEKN. Residues 1–24 form a disordered region; that stretch reads MATVGTEEKNPIGSASNTAEPNVT. Over residues 13 to 24 the composition is skewed to polar residues; the sequence is GSASNTAEPNVT. N-linked (GlcNAc...) asparagine glycosylation is present at Asn22. 3 helical membrane passes run 32-52, 75-97, and 103-123; these read SGFK…LCGL, GWYT…KLYT, and MILL…AAAP. Asn124 is a glycosylation site (N-linked (GlcNAc...) asparagine). 6 helical membrane passes run 133–153, 161–181, 193–213, 234–254, 265–285, and 307–327; these read AIAG…LVHA, ALLG…PFIG, CFII…FFVF, IPEI…LQWG, IIAL…LQVL, and IFAL…PIYF. An N-linked (GlcNAc...) asparagine glycan is attached at Asn332. A helical membrane pass occupies residues 339–359; it reads GVNVMPLILGFLVMSIISGVI. The N-linked (GlcNAc...) asparagine glycan is linked to Asn361. Helical transmembrane passes span 370–390, 396–416, 427–447, and 500–520; these read MFLC…FDVG, WIGY…QPIV, VPFG…IFVA, and VLGQ…LGSL.

It belongs to the major facilitator superfamily.

Its subcellular location is the cell membrane. Its function is as follows. MFS efflux transporter probably involved in thioclapurine export. The protein is MFS thioclapurine efflux transporter tcpA of Claviceps purpurea (strain 20.1) (Ergot fungus).